The primary structure comprises 229 residues: 5'-methylthioadenosine/S-adenosylhomocysteine nucleosidase (229 aa).

The active-site Proton acceptor is E12. Substrate-binding positions include G78, I152, and M173–E174. The Proton donor role is filled by D197.

It belongs to the PNP/UDP phosphorylase family. MtnN subfamily.

It carries out the reaction S-adenosyl-L-homocysteine + H2O = S-(5-deoxy-D-ribos-5-yl)-L-homocysteine + adenine. It catalyses the reaction S-methyl-5'-thioadenosine + H2O = 5-(methylsulfanyl)-D-ribose + adenine. The enzyme catalyses 5'-deoxyadenosine + H2O = 5-deoxy-D-ribose + adenine. It functions in the pathway amino-acid biosynthesis; L-methionine biosynthesis via salvage pathway; S-methyl-5-thio-alpha-D-ribose 1-phosphate from S-methyl-5'-thioadenosine (hydrolase route): step 1/2. Catalyzes the irreversible cleavage of the glycosidic bond in both 5'-methylthioadenosine (MTA) and S-adenosylhomocysteine (SAH/AdoHcy) to adenine and the corresponding thioribose, 5'-methylthioribose and S-ribosylhomocysteine, respectively. Also cleaves 5'-deoxyadenosine, a toxic by-product of radical S-adenosylmethionine (SAM) enzymes, into 5-deoxyribose and adenine. In Histophilus somni (strain 129Pt) (Haemophilus somnus), this protein is 5'-methylthioadenosine/S-adenosylhomocysteine nucleosidase.